Consider the following 486-residue polypeptide: N-succinylglutamate 5-semialdehyde dehydrogenase (486 aa).

An NAD(+)-binding site is contributed by 220–225 (GSSRTG). Catalysis depends on residues glutamate 243 and cysteine 277.

The protein belongs to the aldehyde dehydrogenase family. AstD subfamily.

The enzyme catalyses N-succinyl-L-glutamate 5-semialdehyde + NAD(+) + H2O = N-succinyl-L-glutamate + NADH + 2 H(+). It functions in the pathway amino-acid degradation; L-arginine degradation via AST pathway; L-glutamate and succinate from L-arginine: step 4/5. Its function is as follows. Catalyzes the NAD-dependent reduction of succinylglutamate semialdehyde into succinylglutamate. This chain is N-succinylglutamate 5-semialdehyde dehydrogenase, found in Shewanella baltica (strain OS185).